Reading from the N-terminus, the 173-residue chain is Crossover junction endodeoxyribonuclease RuvC (173 aa).

Active-site residues include Asp8, Glu67, and Asp139. Mg(2+) contacts are provided by Asp8, Glu67, and Asp139.

It belongs to the RuvC family. As to quaternary structure, homodimer which binds Holliday junction (HJ) DNA. The HJ becomes 2-fold symmetrical on binding to RuvC with unstacked arms; it has a different conformation from HJ DNA in complex with RuvA. In the full resolvosome a probable DNA-RuvA(4)-RuvB(12)-RuvC(2) complex forms which resolves the HJ. Mg(2+) is required as a cofactor.

The protein resides in the cytoplasm. It catalyses the reaction Endonucleolytic cleavage at a junction such as a reciprocal single-stranded crossover between two homologous DNA duplexes (Holliday junction).. The RuvA-RuvB-RuvC complex processes Holliday junction (HJ) DNA during genetic recombination and DNA repair. Endonuclease that resolves HJ intermediates. Cleaves cruciform DNA by making single-stranded nicks across the HJ at symmetrical positions within the homologous arms, yielding a 5'-phosphate and a 3'-hydroxyl group; requires a central core of homology in the junction. The consensus cleavage sequence is 5'-(A/T)TT(C/G)-3'. Cleavage occurs on the 3'-side of the TT dinucleotide at the point of strand exchange. HJ branch migration catalyzed by RuvA-RuvB allows RuvC to scan DNA until it finds its consensus sequence, where it cleaves and resolves the cruciform DNA. The sequence is that of Crossover junction endodeoxyribonuclease RuvC from Shewanella sediminis (strain HAW-EB3).